The chain runs to 588 residues: Transcriptional regulatory protein ASH1 (588 aa).

Ser-56 is subject to Phosphoserine. Disordered regions lie at residues 85–109 (SNTAPASPHHMDYNPISSLTPGNSP), 377–398 (SNNSKSNVRKPSKNKISKQASN), and 417–495 (SSVS…TRHT). Polar residues predominate over residues 99–109 (PISSLTPGNSP). Basic residues predominate over residues 383-392 (NVRKPSKNKI). The span at 417–433 (SSVSASSSPSPSTPTKS) shows a compositional bias: low complexity. Ser-465 is modified (phosphoserine). The span at 470 to 493 (PRRSSNSSITKKGSRRSSGSSPTR) shows a compositional bias: low complexity. The GATA-type; atypical zinc finger occupies 499-526 (CVSCHSSDSPCWRPSWSPRKQDQLCNSC).

Component of the RPD3C(L) complex composed of at least ASH1, CTI6, DEP1, PHO23, RPD3, RXT2, RXT3, SAP30, SDS3, SIN3, UME1 and UME6.

It localises to the nucleus. Component of the RPD3C(L) histone deacetylase complex (HDAC). Responsible for the deacetylation of lysine residues on the N-terminal part of the core histones (H2A, H2B, H3 and H4). Histone deacetylation gives a tag for epigenetic repression and plays an important role in transcriptional regulation, cell cycle progression and developmental events. ASH1 is necessary to repress HO in daughter cells to block mating-type switching through its binding to HO promoter 5'-YTGAT-3' sites. Also involved in pseudohyphal growth. This Saccharomyces cerevisiae (strain ATCC 204508 / S288c) (Baker's yeast) protein is Transcriptional regulatory protein ASH1 (ASH1).